Consider the following 3258-residue polypeptide: Protein unc-80 homolog (3258 aa).

Positions 152–173 (VENQGSPGQPCQSSSNDEEENN) are disordered. Residues 155-166 (QGSPGQPCQSSS) show a composition bias toward low complexity. At Ser-257 the chain carries Phosphoserine. Disordered regions lie at residues 291-316 (RGNS…RASL), 449-468 (RKED…GKRR), 522-560 (RRGS…HGEN), 697-717 (KKSE…GAFQ), 732-784 (PAVS…TPVS), 963-1019 (PGKK…EQMQ), 1034-1076 (KSQS…ISLR), 1404-1447 (EDSK…MSNA), and 1817-1836 (AVSA…HHVP). Positions 295–307 (FDGSLSSQTSQER) are enriched in polar residues. Phosphoserine is present on Ser-525. The span at 698 to 712 (KSENKENETLEKRPS) shows a compositional bias: basic and acidic residues. The segment covering 732–767 (PAVSGAGDGGGEEGGGGDGGGGGGDGGGGGGGGGGP) has biased composition (gly residues). Basic and acidic residues-rich tracts occupy residues 769 to 780 (EKNDKNQEKDES) and 965 to 974 (KKVEENEQES). The span at 1035–1052 (SQSAASDTSSQSEQDTSE) shows a compositional bias: low complexity. The segment covering 1066–1076 (ARSRSRRISLR) has biased composition (basic residues). Over residues 1417–1429 (LKSDAGVEEKKEG) the composition is skewed to basic and acidic residues. The next 4 helical transmembrane spans lie at 2268–2288 (PFVL…DAAN), 2398–2418 (IAAT…VEVL), 2785–2805 (GLAE…LVCF), and 2831–2851 (LALW…FVLL). A compositionally biased stretch (polar residues) spans 2942–2964 (NTGTGTVWEQDSEPSQQASQDTL). The interval 2942–2982 (NTGTGTVWEQDSEPSQQASQDTLSRTDEEDEENDSISMPSV) is disordered. The residue at position 3042 (Ser-3042) is a Phosphoserine. Residues 3051–3213 (NLLVQQPLGR…DDFTGLETSS (163 aa)) are disordered. The span at 3059 to 3068 (GRKRGLRQLR) shows a compositional bias: basic residues. The span at 3088 to 3100 (RLSTTRRSIQPKT) shows a compositional bias: polar residues. Positions 3117–3129 (PEPAAAPTDALPA) are enriched in low complexity. Residues 3175–3186 (PTEEGEKEEDTE) are compositionally biased toward acidic residues.

The protein belongs to the unc-80 family. In terms of assembly, NALCN complex consists of NALCN and auxiliary subunits, UNC79, UNC80 and NACL1. These auxiliary subunits are essential for the NALCN complex function. Interacts (via N-terminus half) with NALCN; this interaction facilitates NALCN surface localization. Interacts with UNC79. UNC80 bridges NALCN to UNC79. In terms of processing, phosphorylated on tyrosine residues. In terms of tissue distribution, moderately expressed in fetal brain, spinal cord, skeletal muscle, thymus, spleen, fetal liver, small intestine, colon, kidney and uterus. Highly expressed in adrenal gland, prostate and testis, as well as in brain and cerebellum.

The protein localises to the cell membrane. Functionally, auxiliary subunit of the NALCN sodium channel complex, a voltage-gated ion channel responsible for the resting Na(+) permeability that controls neuronal excitability. Activated by neuropeptides substance P, neurotensin, and extracellular Ca(2+) that regulates neuronal excitability by controlling the sizes of NALCN-dependent sodium-leak current. UNC80 is essential for NALCN sensitivity to extracellular Ca(2+). This Homo sapiens (Human) protein is Protein unc-80 homolog.